A 494-amino-acid chain; its full sequence is Nuclear distribution protein PAC1 (494 aa).

One can recognise a LisH domain in the interval 14–46 (QKNELDKSVLRYLNWNYKQTVRHEHAQDYESVR). Residues 90–123 (NSIVRLQKKIIELEQNTETLVSQIKDLNTQVSEL) adopt a coiled-coil conformation. 7 WD repeats span residues 153–192 (NVES…IPLA), 196–244 (SHTK…CKFQ), 251–292 (GHEH…SLKT), 295–334 (PHSQ…SVGT), 347–395 (HFIE…LMAH), 415–454 (GHLS…HVWE), and 457–492 (HTGF…SNVF).

The protein belongs to the WD repeat LIS1/nudF family. As to quaternary structure, self-associates. Interacts with NDL1 and dynein.

It localises to the cytoplasm. It is found in the cytoskeleton. The protein resides in the spindle pole. In terms of biological role, positively regulates the activity of the minus-end directed microtubule motor protein dynein. Plays a central role in positioning the mitotic spindle at the bud neck during cell division. Targets cytoplasmic dynein to microtubule plus ends, thereby promoting dynein-mediated microtubule sliding along the bud cortex and consequently the movement of the mitotic spindle to the bud neck. The sequence is that of Nuclear distribution protein PAC1 from Saccharomyces cerevisiae (strain Lalvin EC1118 / Prise de mousse) (Baker's yeast).